A 249-amino-acid polypeptide reads, in one-letter code: Proteasome subunit alpha type-3 (249 aa).

Belongs to the peptidase T1A family. In terms of assembly, the 26S proteasome consists of a 20S proteasome core and two 19S regulatory subunits. The 20S proteasome core is composed of 28 subunits that are arranged in four stacked rings, resulting in a barrel-shaped structure. The two end rings are each formed by seven alpha subunits, and the two central rings are each formed by seven beta subunits. The catalytic chamber with the active sites is on the inside of the barrel.

It localises to the cytoplasm. The protein localises to the nucleus. In terms of biological role, the proteasome is a multicatalytic proteinase complex which is characterized by its ability to cleave peptides with Arg, Phe, Tyr, Leu, and Glu adjacent to the leaving group at neutral or slightly basic pH. The proteasome has an ATP-dependent proteolytic activity. This is Proteasome subunit alpha type-3 (PAG1) from Oryza sativa subsp. japonica (Rice).